Here is a 358-residue protein sequence, read N- to C-terminus: uncharacterized protein (358 aa).

This sequence belongs to the SMP-30/CGR1 family.

This is an uncharacterized protein from Saccharomyces cerevisiae (strain ATCC 204508 / S288c) (Baker's yeast).